A 519-amino-acid polypeptide reads, in one-letter code: Voltage-gated potassium channel regulatory subunit KCNG4 (519 aa).

The tract at residues 1–25 is disordered; sequence MPMPSRDGGLHPRHHHYGSHSPWSQ. The Cytoplasmic segment spans residues 1–218; the sequence is MPMPSRDGGL…EMVENPQSGL (218 aa). The helical transmembrane segment at 219–240 threads the bilayer; that stretch reads PGKVFACLSILFVATTAVSLCV. The Extracellular portion of the chain corresponds to 241-261; that stretch reads STMPDLRAEEDQGECSRKCYY. Residues 262–283 form a helical membrane-spanning segment; that stretch reads IFIVETICVAWFSLEFCLRFVQ. The Cytoplasmic segment spans residues 284 to 294; that stretch reads AQDKCQFFQGP. Residues 295–314 form a helical membrane-spanning segment; the sequence is LNIIDILAISPYYVSLAVSE. The Extracellular segment spans residues 315–328; it reads EPPEDGERPSGSSY. The chain crosses the membrane as a helical; Voltage-sensor span at residues 329–353; the sequence is LEKVGLVLRVLRALRILYVMRLARH. At 354-368 the chain is on the cytoplasmic side; that stretch reads SLGLQTLGLTVRRCT. A helical transmembrane segment spans residues 369-390; it reads REFGLLLLFLAVAITLFSPLVY. Over 391–405 the chain is Extracellular; it reads VAEKESGRVLEFTSI. Positions 406 to 417 form an intramembrane region, helical; that stretch reads PASYWWAIISMT. A Selectivity filter motif is present at residues 418–423; that stretch reads TVGYGD. Residues 418–425 lie within the membrane without spanning it; that stretch reads TVGYGDMV. The Extracellular segment spans residues 426–432; sequence PRSVPGQ. A helical transmembrane segment spans residues 433-461; the sequence is MVALSSILSGILIMAFPATSIFHTFSHSY. Residues 462-519 lie on the Cytoplasmic side of the membrane; the sequence is LELKKEQEQLQARLRHLQNTGPASECELLDPHVASEHELMNDVNDLILEGPALPIMHM.

The protein belongs to the potassium channel family. G (TC 1.A.1.2) subfamily. Kv6.4/KCNG4 sub-subfamily. As to quaternary structure, heterotetramer with KCNB1. Does not form homomultimer. In terms of tissue distribution, highly expressed in brain, and at lower levels in liver, small intestine and colon.

It is found in the cell membrane. Its function is as follows. Regulatory subunit of the voltage-gated potassium (Kv) channel which, when coassembled with KCNB1, modulates the kinetics parameters of the heterotetrameric channel namely the time course of activation, deactivation and inactivation and on the voltage-dependence of activation. Potassium channel subunit that does not form functional channels by itself. Reduces the deactivation rate. Modulates the threshold for activation by shifting by approximately 20 mV in hyperpolarizing direction. Markedly changes the inactivation by shifting the voltage dependence of inactivation by approximately 40 mV in hyperpolarizing direction. Acceleratee activation and enhances the time course of activation. This chain is Voltage-gated potassium channel regulatory subunit KCNG4, found in Homo sapiens (Human).